The following is a 341-amino-acid chain: MRLPEISIWKVILLLHLFALQEFQLVSAANLPSLSSSTKAADSSSKGSSSAKTTTSLGKSSVTSKDVSSSHNVTSSTKMPKITTSASTSLYTNSSLWSNNSVISTSSITPSSVYIPVTDGNKFLYQAHHPNGTVFIAFAGCLGAILLSLTGAWIALNIKSWRSARKENKLRNLENQYQHDPFYFQTNINDDESETSSHSDDSDISEKVLKNNSSRMSLYTLGSTSVLNLLNNKTDANDNFRSSMFISPTEILQSDANNSNTWSQSNESAIYDSLSSTPREPGATQILGKFTDSTNPFNYTSYNLSPDSEDRSTPKSNVSQGKVKKYRPPSVHLDQLLDGKE.

Positions 35 to 70 (SSSTKAADSSSKGSSSAKTTTSLGKSSVTSKDVSSS) are enriched in low complexity. Disordered stretches follow at residues 35 to 78 (SSST…SSTK), 272 to 291 (DSLS…GKFT), and 298 to 341 (NYTS…DGKE).

Appears to be a structural component of the chitin synthase 3 complex. The polypeptide is Chitin synthase 3 complex protein CSI2 (CSI2) (Saccharomyces cerevisiae (strain ATCC 204508 / S288c) (Baker's yeast)).